The following is a 302-amino-acid chain: N-acetyl-D-glucosamine kinase (302 aa).

ATP is bound by residues 4-11 (GFDVGGTK) and 133-140 (GFGGGLVY). Residues histidine 157, cysteine 177, cysteine 179, and cysteine 184 each coordinate Zn(2+).

This sequence belongs to the ROK (NagC/XylR) family. NagK subfamily.

It catalyses the reaction N-acetyl-D-glucosamine + ATP = N-acetyl-D-glucosamine 6-phosphate + ADP + H(+). Its pathway is cell wall biogenesis; peptidoglycan recycling. Its function is as follows. Catalyzes the phosphorylation of N-acetyl-D-glucosamine (GlcNAc) derived from cell-wall degradation, yielding GlcNAc-6-P. The protein is N-acetyl-D-glucosamine kinase of Vibrio atlanticus (strain LGP32) (Vibrio splendidus (strain Mel32)).